The primary structure comprises 433 residues: Legumain (433 aa).

Residues 1 to 17 (MVWKVAVFLSVALGIGA) form the signal peptide. An N-linked (GlcNAc...) asparagine glycan is attached at asparagine 91. The active site involves histidine 148. N-linked (GlcNAc...) asparagine glycosylation is present at asparagine 167. The active-site Nucleophile is the cysteine 189. N-linked (GlcNAc...) asparagine glycans are attached at residues asparagine 263 and asparagine 272. Residues 324-433 (DLEESRQLTE…SMDHVCLGHY (110 aa)) constitute a propeptide that is removed on maturation. Cystine bridges form between cysteine 378–cysteine 412 and cysteine 390–cysteine 429.

The protein belongs to the peptidase C13 family. In terms of assembly, homodimer before autocatalytic removal of the propeptide. Monomer after autocatalytic processing. May interact with integrins. Activated by autocatalytic processing at pH 4. Ubiquitous. Particularly abundant in kidney, heart and placenta.

It is found in the lysosome. The catalysed reaction is Hydrolysis of proteins and small molecule substrates at -Asn-|-Xaa- bonds.. With respect to regulation, inhibited by CST6. Functionally, has a strict specificity for hydrolysis of asparaginyl bonds. Can also cleave aspartyl bonds slowly, especially under acidic conditions. Involved in the processing of proteins for MHC class II antigen presentation in the lysosomal/endosomal system. Also involved in MHC class I antigen presentation in cross-presenting dendritic cells by mediating cleavage and maturation of Perforin-2 (MPEG1), thereby promoting antigen translocation in the cytosol. Required for normal lysosomal protein degradation in renal proximal tubules. Required for normal degradation of internalized EGFR. Plays a role in the regulation of cell proliferation via its role in EGFR degradation. In Homo sapiens (Human), this protein is Legumain.